We begin with the raw amino-acid sequence, 468 residues long: Neurexin-1-beta (468 aa).

An N-terminal signal peptide occupies residues 1–46 (MYQRMLRCGAELGSPGGGSSGGAGGRLALLWIVPLTLSGLLGVAWG). Over 47 to 391 (ASSLGAHHIH…AEVIRESSST (345 aa)) the chain is Extracellular. In terms of domain architecture, Laminin G-like spans 87-285 (YIFSKGGGQI…DANIAIVGNV (199 aa)). Residues aspartate 137 and valine 154 each coordinate Ca(2+). Asparagine 184 is a glycosylation site (N-linked (GlcNAc...) asparagine). The tract at residues 201 to 230 (GNNDNERLAIARQRIPYRLGRVVDEWLLDK) is essential for interaction with CBLN1; modulates interaction affinity with NLGN1, NLGN2 and NLGN3; prevents interaction with DAG1/alpha-dystroglycan; modulates interaction with alpha-latrotoxin. Ca(2+)-binding residues include isoleucine 236 and asparagine 238. O-linked (Xyl...) (heparan sulfate) serine glycosylation occurs at serine 346. The interval 350–381 (PSDDEDIDPCEPSSGGLANPTRVGGREPYPGS) is disordered. Residues 392–414 (TGMVVGIVAAAALCILILLYAMY) traverse the membrane as a helical segment. The Cytoplasmic portion of the chain corresponds to 415-468 (KYRNRDEGSYHVDESRNYISNSAQSNGAVVKEKQPSSAKSANKNKKNKDKEYYV). The tract at residues 435 to 468 (NSAQSNGAVVKEKQPSSAKSANKNKKNKDKEYYV) is disordered. Phosphoserine is present on residues serine 450, serine 451, and serine 454.

Belongs to the neurexin family. As to quaternary structure, the cytoplasmic C-terminal region binds to CASK. Binds NLGN1, NLGN2 and NLGN3, DAG1 (alpha-dystroglycan) and alpha-latrotoxin. Binding to neuroligins is calcium-dependent, and the binding preference ranks as follow: NLGN1 &gt; NLGN4 &gt;&gt; NLGN3 &gt; NLGN2. Interacts with CBLN2 and more weakly with CBLN4. Interacts with CBLN1; interaction is CBLN1 hexamer form-dependent; CBLN1-binding is calcium-independent; isoform 1b does not interact with CBLN1. Interacts with CLSTN3. Post-translationally, N-glycosylated. O-glycosylated; contains heparan sulfate. Heparan sulfate attachment is required for synapse development by mediating interactions with neuroligins. Brain.

Its subcellular location is the presynaptic cell membrane. Its function is as follows. Neuronal cell surface protein involved in cell recognition and cell adhesion by forming intracellular junctions through binding to neuroligins. Plays a role in formation of synaptic junctions. Functions as part of a trans-synaptic complex by binding to cerebellins and postsynaptic GRID1. This interaction helps regulate the activity of NMDA and AMPA receptors at hippocampal synapses without affecting synapse formation. NRXN1B-CBLN2-GRID1 complex transduce presynaptic signals into postsynaptic NMDAR response. The protein is Neurexin-1-beta of Rattus norvegicus (Rat).